Reading from the N-terminus, the 506-residue chain is Fe(3+)-transport system permease protein FbpB 2 (506 aa).

The next 12 helical transmembrane spans lie at L9–L29, L57–L77, V90–L110, V116–V136, I174–I194, A218–F238, I275–T295, F314–A334, P350–I370, T379–L399, L428–L448, and A480–L500. The ABC transmembrane type-1 1 domain maps to L52 to F233. In terms of domain architecture, ABC transmembrane type-1 2 spans F310–L500.

This sequence belongs to the binding-protein-dependent transport system permease family. FbpB subfamily. As to quaternary structure, the complex is composed of two ATP-binding proteins (FbpC), two transmembrane proteins (FbpB) and a solute-binding protein (FbpA).

Its subcellular location is the cell inner membrane. Its function is as follows. Part of the ABC transporter complex FbpABC (TC 3.A.1.10.1) involved in Fe(3+) ions import. Probably responsible for the translocation of the substrate across the membrane. In Haemophilus influenzae (strain ATCC 51907 / DSM 11121 / KW20 / Rd), this protein is Fe(3+)-transport system permease protein FbpB 2 (fbpB2).